The primary structure comprises 251 residues: ATP synthase subunit a (251 aa).

Transmembrane regions (helical) follow at residues 28–48 (FTQS…IIAL), 63–80 (LVEI…EQIG), 86–106 (FFPF…LGLF), 115–135 (HVAV…AVAL), 154–176 (ALAP…SLSI), 195–215 (FMFL…LLPM), and 219–239 (VTLV…FAIL).

It belongs to the ATPase A chain family. F-type ATPases have 2 components, CF(1) - the catalytic core - and CF(0) - the membrane proton channel. CF(1) has five subunits: alpha(3), beta(3), gamma(1), delta(1), epsilon(1). CF(0) has three main subunits: a(1), b(2) and c(9-12). The alpha and beta chains form an alternating ring which encloses part of the gamma chain. CF(1) is attached to CF(0) by a central stalk formed by the gamma and epsilon chains, while a peripheral stalk is formed by the delta and b chains.

It localises to the cell inner membrane. In terms of biological role, key component of the proton channel; it plays a direct role in the translocation of protons across the membrane. This Granulibacter bethesdensis (strain ATCC BAA-1260 / CGDNIH1) protein is ATP synthase subunit a.